An 865-amino-acid polypeptide reads, in one-letter code: Nitrogen regulatory protein nrfA (865 aa).

Disordered regions lie at residues 1 to 75 (MEGI…DEMQ), 115 to 140 (RKEREQQEREQQARASETVSPAPSGI), 177 to 227 (FDSP…QDQR), 557 to 605 (GSTD…RTAS), and 617 to 663 (LNGS…AGPT). The segment covering 32-46 (DDFTFDSPFSSSGSS) has biased composition (low complexity). Composition is skewed to basic and acidic residues over residues 115 to 126 (RKEREQQEREQQ) and 180 to 189 (PAEHPSHPSA). A compositionally biased stretch (polar residues) spans 582–592 (ASVSDVRNQNQ). The segment at 665–689 (CTNCFTQTTPLWRRNPEGQPLCNAC) adopts a GATA-type zinc-finger fold. The tract at residues 713–854 (NRSSANTLAV…NHSIAGGQGA (142 aa)) is disordered. Composition is skewed to polar residues over residues 715–724 (SSANTLAVGT) and 737–764 (IQHAPSTSISSRINTSESPPSMTGSNTL). Low complexity-rich tracts occupy residues 771–786 (PIAAAPPKSGPPAGVA) and 830–844 (PLAPAMAPPAAANPA).

It is found in the nucleus. Functionally, major nitrogen regulatory protein. This Penicillium urticae protein is Nitrogen regulatory protein nrfA (nrfA).